The primary structure comprises 255 residues: Probable UDP-N-acetylglucosamine pyrophosphorylase (255 aa).

The enzyme catalyses N-acetyl-alpha-D-glucosamine 1-phosphate + UTP + H(+) = UDP-N-acetyl-alpha-D-glucosamine + diphosphate. Its pathway is nucleotide-sugar biosynthesis; UDP-N-acetyl-alpha-D-glucosamine biosynthesis; UDP-N-acetyl-alpha-D-glucosamine from N-acetyl-alpha-D-glucosamine 1-phosphate: step 1/1. The polypeptide is Probable UDP-N-acetylglucosamine pyrophosphorylase (Acanthamoeba polyphaga (Amoeba)).